The following is a 66-amino-acid chain: Large ribosomal subunit protein uL29 (66 aa).

Belongs to the universal ribosomal protein uL29 family. Part of the 50S ribosomal subunit.

This is Large ribosomal subunit protein uL29 (rpmC) from Bacillus subtilis (strain 168).